Here is a 142-residue protein sequence, read N- to C-terminus: Large ribosomal subunit protein uL13 (142 aa).

The protein belongs to the universal ribosomal protein uL13 family. As to quaternary structure, part of the 50S ribosomal subunit.

This protein is one of the early assembly proteins of the 50S ribosomal subunit, although it is not seen to bind rRNA by itself. It is important during the early stages of 50S assembly. This Edwardsiella ictaluri (strain 93-146) protein is Large ribosomal subunit protein uL13.